The following is a 551-amino-acid chain: Oleuropein beta-glucosidase (551 aa).

A compositionally biased stretch (polar residues) spans 1–27 (MDIQSNVLTITSGSTPTDTSSNGQAAK). The interval 1–33 (MDIQSNVLTITSGSTPTDTSSNGQAAKSTKERI) is disordered. A beta-D-glucoside contacts are provided by residues Gln52, His156, 201–202 (NE), Tyr363, Glu433, Trp482, 489–490 (EW), and Phe498. Glu202 functions as the Proton donor in the catalytic mechanism. Glu433 (nucleophile) is an active-site residue. The interval 502-551 (YVDYANGRYTRLPKRSAVWWRNFLTKPTAVPLKNEPEKSEDRRKRLRGST) is required for the homomultimerization. The tract at residues 532-551 (PLKNEPEKSEDRRKRLRGST) is disordered. Over residues 535–544 (NEPEKSEDRR) the composition is skewed to basic and acidic residues. The short motif at 542–550 (DRRKRLRGS) is the Nuclear localization signal element.

It belongs to the glycosyl hydrolase 1 family. As to quaternary structure, homomultimer. Native form of the enzyme requires at least an octamer conformation. Expressed in expanding leaves and in young drupes, mostly in the developing seed coat tissues, the perisperm and the mesocarp. Also detected in shoot and root meristems, flower buds, developing ovaries and tapetal cells of the anther. Not detected in embryos or endosperm, or in leaf trichomes.

Its subcellular location is the nucleus. It catalyses the reaction oleuropein + H2O = oleuropein aglycone + D-glucose. Major beta-glucosidase activating oleuropein into a potent protein cross-linking agent. No activity with rutin, luteolin or p-nitrophenyl-beta-glucopyranoside as substrates. This chain is Oleuropein beta-glucosidase, found in Olea europaea (Common olive).